The chain runs to 504 residues: Glycerol kinase (504 aa).

Residue Thr-14 coordinates ADP. Positions 14, 15, and 16 each coordinate ATP. Thr-14 serves as a coordination point for sn-glycerol 3-phosphate. Arg-18 contributes to the ADP binding site. Residues Arg-84, Glu-85, Tyr-136, and Asp-246 each contribute to the sn-glycerol 3-phosphate site. Positions 84, 85, 136, 246, and 247 each coordinate glycerol. Residues Thr-268 and Gly-311 each coordinate ADP. The ATP site is built by Thr-268, Gly-311, Gln-315, and Gly-412. Residues Gly-412 and Asn-416 each contribute to the ADP site.

Belongs to the FGGY kinase family.

The catalysed reaction is glycerol + ATP = sn-glycerol 3-phosphate + ADP + H(+). Its pathway is polyol metabolism; glycerol degradation via glycerol kinase pathway; sn-glycerol 3-phosphate from glycerol: step 1/1. With respect to regulation, inhibited by fructose 1,6-bisphosphate (FBP). In terms of biological role, key enzyme in the regulation of glycerol uptake and metabolism. Catalyzes the phosphorylation of glycerol to yield sn-glycerol 3-phosphate. This is Glycerol kinase from Aliivibrio salmonicida (strain LFI1238) (Vibrio salmonicida (strain LFI1238)).